The chain runs to 434 residues: Flagellum-specific ATP synthase (434 aa).

164 to 171 (AGSGVGKS) lines the ATP pocket.

It belongs to the ATPase alpha/beta chains family.

Its subcellular location is the cytoplasm. The catalysed reaction is ATP + H2O + 4 H(+)(in) = ADP + phosphate + 5 H(+)(out). In terms of biological role, probable catalytic subunit of a protein translocase for flagellum-specific export, or a proton translocase involved in local circuits at the flagellum. The chain is Flagellum-specific ATP synthase (fliI) from Helicobacter pylori (strain ATCC 700392 / 26695) (Campylobacter pylori).